Consider the following 486-residue polypeptide: Ribulose bisphosphate carboxylase large chain 3 (486 aa).

Asn-125 and Thr-175 together coordinate substrate. Catalysis depends on Lys-177, which acts as the Proton acceptor. Lys-179 provides a ligand contact to substrate. Positions 203, 205, and 206 each coordinate Mg(2+). Lys-203 carries the N6-carboxylysine modification. His-295 functions as the Proton acceptor in the catalytic mechanism. Residues Arg-296, His-328, and Ser-380 each contribute to the substrate site.

Belongs to the RuBisCO large chain family. Type I subfamily. In terms of assembly, heterohexadecamer of 8 large chains and 8 small chains. It depends on Mg(2+) as a cofactor.

It catalyses the reaction 2 (2R)-3-phosphoglycerate + 2 H(+) = D-ribulose 1,5-bisphosphate + CO2 + H2O. The catalysed reaction is D-ribulose 1,5-bisphosphate + O2 = 2-phosphoglycolate + (2R)-3-phosphoglycerate + 2 H(+). Its function is as follows. RuBisCO catalyzes two reactions: the carboxylation of D-ribulose 1,5-bisphosphate, the primary event in carbon dioxide fixation, as well as the oxidative fragmentation of the pentose substrate. Both reactions occur simultaneously and in competition at the same active site. The protein is Ribulose bisphosphate carboxylase large chain 3 of Bradyrhizobium sp. (strain BTAi1 / ATCC BAA-1182).